Here is a 101-residue protein sequence, read N- to C-terminus: Small ribosomal subunit protein bS18c (101 aa).

Belongs to the bacterial ribosomal protein bS18 family. Part of the 30S ribosomal subunit.

The protein localises to the plastid. Its subcellular location is the chloroplast. The chain is Small ribosomal subunit protein bS18c from Gossypium hirsutum (Upland cotton).